Reading from the N-terminus, the 547-residue chain is MPSVALNSPRLPRVFVVGVGMTKFMKPGGENSRDYPDLAKEAGQKALADRQIPYSAVEQACVGYVYGESTCGQRAIYHSLGLTGIPIINVNNNCSTGSTALFMAQQLVQGGLANCVLALGFEKMEKGSLGTKYSDRSNPLEKHIDVLINKYGMSACPFAPQLFGSAGKEHMETYGTKVEHFAKIGWKNHKHSVNNPYSQFQDEYSLDEIMKSRPVFDFLTVLQCCPTSDGAAAAIVSSEEFVQKHGLQSKAVEIVAQEMVTDMPSTFEEKSVIKMVGYDMSKEAARKCYEKSGLGPSDVDVIELHDCFSTNELLTYEALGLCPEGQGGALVDRGDNTYGGKWVINPSGGLISKGHPLGATGLAQCAELCWQLRGEAGKRQVPGAKVALQHNLGLGGAAVVTLYRMGFPEAASSFRTHQISAAPTSSAGDGFKANLIFKEIEKKLEEEGEEFVKKIGGIFAFKVKDGPGGKEATWVVDVKNGKGSVLPDSDKKADCTITMADSDLLALMTGKMNPQSAFFQGKLKIAGNMGLAMKLQSLQLQPDKAKL.

2 positions are modified to phosphoserine: Ser3 and Ser8. Lys40 bears the N6-succinyllysine mark. At Lys132 the chain carries N6-acetyllysine; alternate. Lys132 is subject to N6-succinyllysine; alternate. Lys168 is modified (N6-succinyllysine). At Lys177 the chain carries N6-acetyllysine. Lys183 bears the N6-acetyllysine; alternate mark. Lys183 is subject to N6-succinyllysine; alternate. N6-succinyllysine occurs at positions 211 and 282. Lys341, Lys432, Lys438, Lys443, and Lys453 each carry N6-acetyllysine; alternate. Residues Lys341, Lys432, Lys438, Lys443, and Lys453 each carry the N6-succinyllysine; alternate modification. Positions 433-543 (ANLIFKEIEK…KLQSLQLQPD (111 aa)) constitute an SCP2 domain. Lys464 bears the N6-succinyllysine mark. At Lys470 the chain carries N6-acetyllysine; alternate. Lys470 carries the post-translational modification N6-succinyllysine; alternate. An N6-succinyllysine modification is found at Lys479. The residue at position 491 (Lys491) is an N6-acetyllysine. Lys492 and Lys511 each carry N6-succinyllysine. Ser516 is modified (phosphoserine). N6-succinyllysine occurs at positions 522 and 534. Ser537 is modified (phosphoserine). Residue Lys544 is modified to N6-succinyllysine. Residues 545 to 547 (AKL) carry the Microbody targeting signal motif.

In the N-terminal section; belongs to the thiolase-like superfamily. Thiolase family. In terms of assembly, interacts with PEX5; the interaction is essential for peroxisomal import. Post-translationally, preSCP2, a protein with a molecular mass of about 15 kDa, is processed into its mature form (SCP2) by proteolytic cleavage of a 20 residue leader sequence after translocation into peroxisomes. Liver &gt; intestine &gt; brain &gt; lung, colon, stomach, spleen, kidney, heart and ovary. As to expression, expressed in liver (at protein level).

It localises to the peroxisome. The protein resides in the cytoplasm. The protein localises to the mitochondrion. The catalysed reaction is an acyl-CoA + acetyl-CoA = a 3-oxoacyl-CoA + CoA. The enzyme catalyses choloyl-CoA + propanoyl-CoA = 3alpha,7alpha,12alpha-trihydroxy-24-oxo-5beta-cholestan-26-oyl-CoA + CoA. It catalyses the reaction 4,8,12-trimethyltridecanoyl-CoA + propanoyl-CoA = 3-oxopristanoyl-CoA + CoA. It carries out the reaction hexanoyl-CoA + acetyl-CoA = 3-oxooctanoyl-CoA + CoA. The catalysed reaction is tetradecanoyl-CoA + acetyl-CoA = 3-oxohexadecanoyl-CoA + CoA. The enzyme catalyses 3-oxohexadecanedioyl-CoA + CoA = tetradecanedioyl-CoA + acetyl-CoA. It catalyses the reaction propanoyl-CoA + tetradecanoyl-CoA = 3-oxo-2-methylhexadecanoyl-CoA + CoA. It carries out the reaction butanoyl-CoA + acetyl-CoA = 3-oxohexanoyl-CoA + CoA. The catalysed reaction is octanoyl-CoA + acetyl-CoA = 3-oxodecanoyl-CoA + CoA. The enzyme catalyses decanoyl-CoA + acetyl-CoA = 3-oxododecanoyl-CoA + CoA. It catalyses the reaction dodecanoyl-CoA + acetyl-CoA = 3-oxotetradecanoyl-CoA + CoA. It carries out the reaction hexadecanoyl-CoA + acetyl-CoA = 3-oxooctadecanoyl-CoA + CoA. The catalysed reaction is 3-oxo-(9Z-octadecenoyl)-CoA + CoA = (7Z)-hexadecenoyl-CoA + acetyl-CoA. The enzyme catalyses 7-dehydrocholesterol(in) = 7-dehydrocholesterol(out). Plays a crucial role in the peroxisomal oxidation of branched-chain fatty acids. Catalyzes the last step of the peroxisomal beta-oxidation of branched chain fatty acids and the side chain of the bile acid intermediates di- and trihydroxycoprostanic acids (DHCA and THCA). Also active with medium and long straight chain 3-oxoacyl-CoAs. Stimulates the microsomal conversion of 7-dehydrocholesterol to cholesterol and transfers phosphatidylcholine and 7-dehydrocholesterol between membrances, in vitro. Isoforms SCP2 and SCPx cooperate in peroxisomal oxidation of certain naturally occurring tetramethyl-branched fatty acyl-CoAs. Its function is as follows. Mediates the transfer of all common phospholipids, cholesterol and gangliosides from the endoplasmic reticulum to the plasma membrane. May play a role in regulating steroidogenesis. Stimulates the microsomal conversion of 7-dehydrocholesterol to cholesterol. Also binds fatty acids and fatty acyl Coenzyme A (CoA) such as phytanoyl-CoA. Involved in the regulation phospholipid synthesis in endoplasmic reticulum enhancing the incorporation of exogenous fatty acid into glycerides. Seems to stimulate the rate-limiting step in phosphatidic acid formation mediated by GPAT3. Isoforms SCP2 and SCPx cooperate in peroxisomal oxidation of certain naturally occurring tetramethyl-branched fatty acyl-CoAs. The sequence is that of Sterol carrier protein 2 from Rattus norvegicus (Rat).